We begin with the raw amino-acid sequence, 217 residues long: Guanylate kinase (217 aa).

A compositionally biased stretch (low complexity) spans 1–10 (MAVSSTTLSS). The segment at 1–30 (MAVSSTTLSSPTPPECLQQQEAPRPPATRG) is disordered. Positions 30 to 208 (GRLVVLTGPS…ALQELEALLY (179 aa)) constitute a Guanylate kinase-like domain. 37–44 (GPSGVGKG) provides a ligand contact to ATP.

This sequence belongs to the guanylate kinase family.

The protein resides in the cytoplasm. The catalysed reaction is GMP + ATP = GDP + ADP. The enzyme catalyses dZMP + ATP = dZDP + ADP. It participates in purine metabolism. Essential for recycling GMP and indirectly, cGMP. Functionally, (Microbial infection) Catalyzes the phosphorylation of dZMP to dZDP, when the bacterium is infected by a phage that produces the substrate for the synthesis of dZTP (2- amino-2'-deoxyadenosine 5'-triphosphate), which is then used by the phage as a DNA polymerase substrate. The polypeptide is Guanylate kinase (Synechococcus sp. (strain JA-3-3Ab) (Cyanobacteria bacterium Yellowstone A-Prime)).